We begin with the raw amino-acid sequence, 229 residues long: Cytochrome c oxidase assembly factor 7 (229 aa).

Sel1-like repeat units lie at residues 34–66 (PEGC…EVNA), 68–104 (AQSC…NTQG), 108–145 (VDAC…EGGF), 146–182 (APSC…DLGH), and 183–218 (VWGC…DLHG). The interval 197-229 (DGTDKDEQRAEELKNRAKDLHGQEKERQLKFGE) is disordered.

This sequence belongs to the hcp beta-lactamase family.

It localises to the mitochondrion intermembrane space. May be required for assembly of mitochondrial respiratory chain complexes. The polypeptide is Cytochrome c oxidase assembly factor 7 (coa7) (Danio rerio (Zebrafish)).